The chain runs to 319 residues: Pre T-cell antigen receptor alpha (319 aa).

The first 16 residues, 1-16 (MAESWLLLLLALGCPA), serve as a signal peptide directing secretion. The Extracellular portion of the chain corresponds to 17–160 (LPTEVTTLLR…LRGTRALVLR (144 aa)). A disulfide bridge links cysteine 58 with cysteine 118. N-linked (GlcNAc...) asparagine glycosylation is present at asparagine 78. The chain crosses the membrane as a helical span at residues 161-181 (LGALRLLLFKLLLLDVLLTCG). The Cytoplasmic portion of the chain corresponds to 182–319 (RLHAPPAARG…PPADPSFPGG (138 aa)). Over residues 189–207 (ARGDPAGASGPGAPSLPAP) the composition is skewed to low complexity. The tract at residues 189 to 293 (ARGDPAGASG…VLRAWSSGPS (105 aa)) is disordered. A compositionally biased stretch (basic residues) spans 260-271 (RRRRVHTRRPRR).

Heterodimer with TCRB; disulfide linked. This heterodimer assembles with CD3 proteins into a signaling-competent pre-T-cell receptor complex. Interacts with RHBDD1.

Its subcellular location is the membrane. The protein localises to the cell membrane. In terms of biological role, component of the pre-T-cell receptor complex (composed of PTCRA, TCRB and the CD3 complex) that has a crucial role in early T-cell development, particularly alpha-beta T cell differentiation. The sequence is that of Pre T-cell antigen receptor alpha (PTCRA) from Bos taurus (Bovine).